The sequence spans 118 residues: Myotrophin (118 aa).

3 ANK repeats span residues 1–30, 34–65, and 67–98; these read MGDK…DVNR, GGRK…NAAD, and HGIT…NVKG.

Belongs to the myotrophin family.

Its subcellular location is the cytoplasm. The protein resides in the nucleus. It is found in the perinuclear region. Its function is as follows. Regulates NF-kappa-B transcription factor activity. Promotes growth of cardiomyocytes, but not cardiomyocyte proliferation. Promotes cardiac muscle hypertrophy. Plays a role in the regulation of the growth of actin filaments. Inhibits the activity of the F-actin-capping protein complex. The sequence is that of Myotrophin (mtpn) from Xenopus laevis (African clawed frog).